Consider the following 471-residue polypeptide: Glutamate--tRNA ligase (471 aa).

The 'HIGH' region signature appears at 9-19 (PSPTGYLHVGG). The Zn(2+) site is built by Cys98, Cys100, Cys125, and His127. A 'KMSKS' region motif is present at residues 237 to 241 (KLSKR). Lys240 serves as a coordination point for ATP.

It belongs to the class-I aminoacyl-tRNA synthetase family. Glutamate--tRNA ligase type 1 subfamily. Monomer. It depends on Zn(2+) as a cofactor.

Its subcellular location is the cytoplasm. It catalyses the reaction tRNA(Glu) + L-glutamate + ATP = L-glutamyl-tRNA(Glu) + AMP + diphosphate. In terms of biological role, catalyzes the attachment of glutamate to tRNA(Glu) in a two-step reaction: glutamate is first activated by ATP to form Glu-AMP and then transferred to the acceptor end of tRNA(Glu). This chain is Glutamate--tRNA ligase, found in Escherichia coli O9:H4 (strain HS).